Here is a 648-residue protein sequence, read N- to C-terminus: DNA gyrase subunit B (648 aa).

In terms of domain architecture, Toprim spans 427–541 (TELFIVEGDS…AGYVYIAQPP (115 aa)). Mg(2+) is bound by residues E433, D506, and D508.

It belongs to the type II topoisomerase GyrB family. Heterotetramer, composed of two GyrA and two GyrB chains. In the heterotetramer, GyrA contains the active site tyrosine that forms a transient covalent intermediate with DNA, while GyrB binds cofactors and catalyzes ATP hydrolysis. Mg(2+) is required as a cofactor. Mn(2+) serves as cofactor. It depends on Ca(2+) as a cofactor.

It is found in the cytoplasm. The enzyme catalyses ATP-dependent breakage, passage and rejoining of double-stranded DNA.. Functionally, a type II topoisomerase that negatively supercoils closed circular double-stranded (ds) DNA in an ATP-dependent manner to modulate DNA topology and maintain chromosomes in an underwound state. Negative supercoiling favors strand separation, and DNA replication, transcription, recombination and repair, all of which involve strand separation. Also able to catalyze the interconversion of other topological isomers of dsDNA rings, including catenanes and knotted rings. Type II topoisomerases break and join 2 DNA strands simultaneously in an ATP-dependent manner. This chain is DNA gyrase subunit B, found in Streptococcus pneumoniae serotype 4 (strain ATCC BAA-334 / TIGR4).